Consider the following 79-residue polypeptide: Protein SNA2 (79 aa).

The Cytoplasmic portion of the chain corresponds to 1-6 (MHARDW). A helical transmembrane segment spans residues 7-27 (FLVFIAIFIPPLAVWLKRGFF). Topologically, residues 28-32 (TKDLL) are vesicular. The chain crosses the membrane as a helical span at residues 33 to 53 (INFLLFLLGFFPGLIHALYVI). Residues 54-79 (SCHPYEENEARYSHLSSSDDNYGSLA) are Cytoplasmic-facing. Phosphoserine is present on residues serine 71 and serine 77.

Belongs to the UPF0057 (PMP3) family.

The protein resides in the membrane. Its subcellular location is the lipid droplet. This Saccharomyces cerevisiae (strain ATCC 204508 / S288c) (Baker's yeast) protein is Protein SNA2 (SNA2).